Reading from the N-terminus, the 432-residue chain is Putative D-alanyl-D-alanine carboxypeptidase (432 aa).

Residues 7 to 25 (ATVLLTFSLSAFAVEYPVL) form a helical; Signal-anchor membrane-spanning segment.

This sequence belongs to the peptidase S12 family. YfeW subfamily.

Its subcellular location is the cell inner membrane. It catalyses the reaction Preferential cleavage: (Ac)2-L-Lys-D-Ala-|-D-Ala. Also transpeptidation of peptidyl-alanyl moieties that are N-acyl substituents of D-alanine.. This is Putative D-alanyl-D-alanine carboxypeptidase from Salmonella schwarzengrund (strain CVM19633).